A 500-amino-acid chain; its full sequence is Neuronal pentraxin receptor (500 aa).

The Cytoplasmic segment spans residues 1–2; sequence MK. A helical; Signal-anchor for type II membrane protein transmembrane segment spans residues 3-23; the sequence is FLAVLLAAGMLAFLGAVICII. Residues 24-500 lie on the Extracellular side of the membrane; that stretch reads ASVPLAASPA…FDVCKGRAKA (477 aa). Asparagine 42 carries N-linked (GlcNAc...) asparagine glycosylation. The span at 42 to 63 shows a compositional bias: low complexity; sequence NASVASGAAASPGPQRSLSALH. Disordered stretches follow at residues 42-81 and 162-183; these read NASVASGAAASPGPQRSLSALHGAGGSAGPPALPGAPAAS and ESGLPRGLQGAGPRRDTMADGP. Residue asparagine 216 is glycosylated (N-linked (GlcNAc...) asparagine). Positions 292–494 constitute a Pentraxin (PTX) domain; sequence DAFKISIPIR…GATKAAFDVC (203 aa). A disulfide bridge links cysteine 322 with cysteine 383. Asparagine 347, glutamate 425, glutamine 426, aspartate 427, and glutamine 437 together coordinate Ca(2+). A glycan (N-linked (GlcNAc...) asparagine) is linked at asparagine 463.

As to quaternary structure, heteropentamer with NPTX1 and/or NPTX2. Also binds taipoxin-associated calcium-binding protein 49 (TCBP49/RCN2). Interacts with KLHL2. The cofactor is Ca(2+). In terms of processing, ubiquitinated by a cullin-RING-based BCR (BTB-CUL3-RBX1) E3 ubiquitin-protein ligase complex containing KLHL2.

The protein localises to the membrane. May be involved in mediating uptake of synaptic material during synapse remodeling or in mediating the synaptic clustering of AMPA glutamate receptors at a subset of excitatory synapses. The protein is Neuronal pentraxin receptor (NPTXR) of Homo sapiens (Human).